The primary structure comprises 303 residues: Ribosomal protein L11 methyltransferase (303 aa).

Residues Thr-152, Gly-173, Asp-195, and Asn-239 each contribute to the S-adenosyl-L-methionine site.

It belongs to the methyltransferase superfamily. PrmA family.

It is found in the cytoplasm. It catalyses the reaction L-lysyl-[protein] + 3 S-adenosyl-L-methionine = N(6),N(6),N(6)-trimethyl-L-lysyl-[protein] + 3 S-adenosyl-L-homocysteine + 3 H(+). In terms of biological role, methylates ribosomal protein L11. This is Ribosomal protein L11 methyltransferase from Desulforapulum autotrophicum (strain ATCC 43914 / DSM 3382 / VKM B-1955 / HRM2) (Desulfobacterium autotrophicum).